Reading from the N-terminus, the 258-residue chain is Imidazole glycerol phosphate synthase subunit HisF (258 aa).

Residues aspartate 11 and aspartate 130 contribute to the active site.

The protein belongs to the HisA/HisF family. In terms of assembly, heterodimer of HisH and HisF.

The protein resides in the cytoplasm. It carries out the reaction 5-[(5-phospho-1-deoxy-D-ribulos-1-ylimino)methylamino]-1-(5-phospho-beta-D-ribosyl)imidazole-4-carboxamide + L-glutamine = D-erythro-1-(imidazol-4-yl)glycerol 3-phosphate + 5-amino-1-(5-phospho-beta-D-ribosyl)imidazole-4-carboxamide + L-glutamate + H(+). Its pathway is amino-acid biosynthesis; L-histidine biosynthesis; L-histidine from 5-phospho-alpha-D-ribose 1-diphosphate: step 5/9. Its function is as follows. IGPS catalyzes the conversion of PRFAR and glutamine to IGP, AICAR and glutamate. The HisF subunit catalyzes the cyclization activity that produces IGP and AICAR from PRFAR using the ammonia provided by the HisH subunit. This Methylobacterium sp. (strain 4-46) protein is Imidazole glycerol phosphate synthase subunit HisF.